The sequence spans 348 residues: Dihydroorotase (348 aa).

Zn(2+) contacts are provided by His14 and His16. Substrate contacts are provided by residues 16–18 (HLR) and Asn42. Zn(2+) contacts are provided by Lys100, His137, and His175. Lys100 carries the post-translational modification N6-carboxylysine. Position 137 (His137) interacts with substrate. Leu220 contributes to the substrate binding site. Residue Asp248 coordinates Zn(2+). Asp248 is a catalytic residue. 2 residues coordinate substrate: His252 and Ala264.

Belongs to the metallo-dependent hydrolases superfamily. DHOase family. Class II DHOase subfamily. As to quaternary structure, homodimer. Zn(2+) serves as cofactor.

It catalyses the reaction (S)-dihydroorotate + H2O = N-carbamoyl-L-aspartate + H(+). Its pathway is pyrimidine metabolism; UMP biosynthesis via de novo pathway; (S)-dihydroorotate from bicarbonate: step 3/3. In terms of biological role, catalyzes the reversible cyclization of carbamoyl aspartate to dihydroorotate. The protein is Dihydroorotase of Pseudomonas putida (strain ATCC 700007 / DSM 6899 / JCM 31910 / BCRC 17059 / LMG 24140 / F1).